A 387-amino-acid chain; its full sequence is ATP phosphoribosyltransferase regulatory subunit (387 aa).

The protein belongs to the class-II aminoacyl-tRNA synthetase family. HisZ subfamily. In terms of assembly, heteromultimer composed of HisG and HisZ subunits.

It is found in the cytoplasm. The protein operates within amino-acid biosynthesis; L-histidine biosynthesis; L-histidine from 5-phospho-alpha-D-ribose 1-diphosphate: step 1/9. Its function is as follows. Required for the first step of histidine biosynthesis. May allow the feedback regulation of ATP phosphoribosyltransferase activity by histidine. This Ralstonia pickettii (strain 12J) protein is ATP phosphoribosyltransferase regulatory subunit.